Here is a 560-residue protein sequence, read N- to C-terminus: DNA ligase B (560 aa).

The active-site N6-AMP-lysine intermediate is Lys-124.

The protein belongs to the NAD-dependent DNA ligase family. LigB subfamily.

The catalysed reaction is NAD(+) + (deoxyribonucleotide)n-3'-hydroxyl + 5'-phospho-(deoxyribonucleotide)m = (deoxyribonucleotide)n+m + AMP + beta-nicotinamide D-nucleotide.. Catalyzes the formation of phosphodiester linkages between 5'-phosphoryl and 3'-hydroxyl groups in double-stranded DNA using NAD as a coenzyme and as the energy source for the reaction. The protein is DNA ligase B of Escherichia coli (strain K12 / DH10B).